Reading from the N-terminus, the 208-residue chain is Holliday junction resolvase RecU (208 aa).

Residues T87, D89, E102, and Q121 each coordinate Mg(2+).

The protein belongs to the RecU family. The cofactor is Mg(2+).

The protein resides in the cytoplasm. The catalysed reaction is Endonucleolytic cleavage at a junction such as a reciprocal single-stranded crossover between two homologous DNA duplexes (Holliday junction).. Functionally, endonuclease that resolves Holliday junction intermediates in genetic recombination. Cleaves mobile four-strand junctions by introducing symmetrical nicks in paired strands. Promotes annealing of linear ssDNA with homologous dsDNA. Required for DNA repair, homologous recombination and chromosome segregation. In Staphylococcus aureus (strain MRSA252), this protein is Holliday junction resolvase RecU.